The sequence spans 229 residues: Potassium/proton antiporter CemA (229 aa).

3 helical membrane passes run 6–26 (AFIP…ISLC), 107–127 (ILHF…SFWG), and 189–209 (ILSG…KYWI).

This sequence belongs to the CemA family.

The protein localises to the plastid. Its subcellular location is the chloroplast inner membrane. It catalyses the reaction K(+)(in) + H(+)(out) = K(+)(out) + H(+)(in). Contributes to K(+)/H(+) antiport activity by supporting proton efflux to control proton extrusion and homeostasis in chloroplasts in a light-dependent manner to modulate photosynthesis. Prevents excessive induction of non-photochemical quenching (NPQ) under continuous-light conditions. Indirectly promotes efficient inorganic carbon uptake into chloroplasts. In Barbarea verna (Land cress), this protein is Potassium/proton antiporter CemA.